Reading from the N-terminus, the 107-residue chain is Putative double-stranded DNA mimic protein HS_0995 (107 aa).

Belongs to the putative dsDNA mimic protein family.

In terms of biological role, may act as a double-stranded DNA (dsDNA) mimic. Probably regulates the activity of a dsDNA-binding protein. The polypeptide is Putative double-stranded DNA mimic protein HS_0995 (Histophilus somni (strain 129Pt) (Haemophilus somnus)).